The chain runs to 1275 residues: Membrane-associated guanylate kinase, WW and PDZ domain-containing protein 2 (1275 aa).

Residues glutamate 17–glycine 101 form the PDZ 1 domain. The Guanylate kinase-like domain occupies arginine 109–lysine 283. The tract at residues leucine 203–aspartate 305 is disordered. Basic and acidic residues predominate over residues glutamate 280 to glutamate 295. 2 consecutive WW domains span residues aspartate 301–leucine 334 and asparagine 347–leucine 380. The segment at aspartate 301–leucine 380 is interaction with DDN. Position 361 is a phosphotyrosine (tyrosine 361). PDZ domains follow at residues serine 425–tyrosine 509 and threonine 604–glycine 682. Residue serine 685 is modified to Phosphoserine. The disordered stretch occupies residues glutamate 698–aspartate 740. The segment covering asparagine 699–serine 708 has biased composition (polar residues). The 83-residue stretch at aspartate 777–arginine 859 folds into the PDZ 4 domain. Tyrosine 826 bears the Phosphotyrosine mark. The segment at cysteine 868–serine 912 is disordered. Phosphoserine occurs at positions 883 and 884. Positions serine 893–proline 907 are enriched in low complexity. The PDZ 5 domain occupies aspartate 919–glutamate 1009. Residues glutamate 1010 to alanine 1040 show a composition bias toward polar residues. The segment at glutamate 1010 to aspartate 1128 is disordered. Serine 1013 carries the post-translational modification Phosphoserine. Positions asparagine 1067–isoleucine 1083 are enriched in basic and acidic residues. The PDZ 6 domain occupies threonine 1139–threonine 1221.

It belongs to the MAGUK family. As to quaternary structure, interacts (via its WW domains) with DRPLA. Interacts (via its second PDZ domain) with PTEN (via unphosphorylated C-terminus); this interaction diminishes the degradation rate of PTEN. Interacts (via guanylate kinase domain) with DLGAP1. Interacts (via the PDZ domains) with GRIN2A, GRID2 and NLGN1. Interacts with CTNND2, CTNNB1 and MAGUIN-1. Interacts with ACVR2A, SMAD2 and SMAD3. Part of a complex consisting of MAGI2/ARIP1, ACVR2A, ACVR1B and SMAD3. May interact with HTR2A. Interacts with RAPGEF2. Identified in a complex with ACTN4, CASK, IQGAP1, NPHS1, SPTAN1 and SPTBN1. Interacts with DDN. Found in a complex, at least composed of KIDINS220, MAGI2, NTRK1 and RAPGEF2; the complex is mainly formed at late endosomes in a NGF-dependent manner. Interacts with RAPGEF2; the interaction occurs before or after nerve growth factor (NGF) stimulation. Interacts (via PDZ domain) with KIDINS220 (via C-terminal domain). Interacts with IGSF9 and HTR4. Interacts with DLL1. Found in a complex with IGSF9B and NLGN2; the interaction with IGSF9B is mediated via the PDZ 5 and PDZ 6 domains, while the interaction with NLGN2 is mediated via the WW1, WW2 and PDZ2 domains. Interacts (via PDZ 6 domain) with USH1G (via SAM domain); the interaction is triggered by phosphorylation of USH1G by CK2 and negatively regulates MAGI2-mediated endocytosis. In terms of tissue distribution, expressed throughout the retina except in the nuclear layers and the photoreceptor outer segments (at protein level). Highest retinal expression is observed in the outer plexiform layer, the outer limiting membrane and the inner segment of photoreceptor cells (at protein level). Expressed in brain.

It localises to the cytoplasm. Its subcellular location is the late endosome. It is found in the synapse. The protein resides in the synaptosome. The protein localises to the cell membrane. It localises to the cytoskeleton. Its subcellular location is the microtubule organizing center. It is found in the centrosome. The protein resides in the cell projection. The protein localises to the cilium. It localises to the centriole. Its subcellular location is the photoreceptor inner segment. It is found in the photoreceptor outer segment. In terms of biological role, seems to act as a scaffold molecule at synaptic junctions by assembling neurotransmitter receptors and cell adhesion proteins. Plays a role in nerve growth factor (NGF)-induced recruitment of RAPGEF2 to late endosomes and neurite outgrowth. May play a role in regulating activin-mediated signaling in neuronal cells. Enhances the ability of PTEN to suppress AKT1 activation. Plays a role in receptor-mediated clathrin-dependent endocytosis which is required for ciliogenesis. The sequence is that of Membrane-associated guanylate kinase, WW and PDZ domain-containing protein 2 (Magi2) from Mus musculus (Mouse).